We begin with the raw amino-acid sequence, 1193 residues long: Probable cation-transporting ATPase 13A4 (1193 aa).

Residues 1-32 (MGDHLEKSQHALLNEGDENEMEIFGYRTQGCR) are Cytoplasmic-facing. An intramembrane segment occupies 33–53 (KALCLIGSIFSLGMLPLVFYW). At 54-198 (RPAWRVWANC…DVEITPIWKL (145 aa)) the chain is on the cytoplasmic side. Residues 199–219 (LIKEVLNPFYIFQLFSVCLWF) traverse the membrane as a helical segment. The Lumenal portion of the chain corresponds to 220–224 (SEDYK). The chain crosses the membrane as a helical span at residues 225 to 245 (EYALAIILMSVISIALTVYDL). At 246–401 (RQQSVKLHHL…NFKLYRDAIR (156 aa)) the chain is on the cytoplasmic side. Residues 402–422 (FLLCLVGTATIGMVYTLCVYV) traverse the membrane as a helical segment. Over 423–437 (LSGEPPEEVVRKALD) the chain is Lumenal. Residues 438 to 458 (VITIAVPPALPAALTTGIIYA) traverse the membrane as a helical segment. Residues 459 to 901 (QRRLKKKGIF…KEGRAALVTS (443 aa)) lie on the Cytoplasmic side of the membrane. Asp-487 acts as the 4-aspartylphosphate intermediate in catalysis. Mg(2+) is bound by residues Asp-849 and Asp-853. Residues 902–922 (FCMFKYMALYSMIQYVGVLLL) traverse the membrane as a helical segment. Topologically, residues 923-933 (YWKTNSLSNYQ) are lumenal. The chain crosses the membrane as a helical span at residues 934 to 954 (FLFQDLAITTLIGVTMNLNGA). Topologically, residues 955–973 (NPKLVPFRPAGRLISPPLL) are cytoplasmic. Residues 974-994 (LSVVLNILLSLAMHIVGFILV) form a helical membrane-spanning segment. Topologically, residues 995-1036 (QKQPWYIMDYHSVCPVRNESASALAASPSVPEKTRSNSTFAS) are lumenal. A helical transmembrane segment spans residues 1037–1057 (FENTTIWFLGTINCIFVALVF). Residues 1058–1071 (SKGKPFRQPTYTNY) lie on the Cytoplasmic side of the membrane. The chain crosses the membrane as a helical span at residues 1072–1092 (IFVLVLILQMGVCLFILFADI). The Lumenal portion of the chain corresponds to 1093-1105 (PEMHRRLDLLCTP). Residues 1106-1126 (VLWRVYILIMISSNFVVSLAV) traverse the membrane as a helical segment. Over 1127-1193 (EKAIIENRAL…PVFESNEEQL (67 aa)) the chain is Cytoplasmic.

Belongs to the cation transport ATPase (P-type) (TC 3.A.3) family. Type V subfamily. In terms of tissue distribution, expressed in brain and stomach.

Its subcellular location is the early endosome membrane. It localises to the late endosome membrane. The protein localises to the recycling endosome membrane. The catalysed reaction is ATP + H2O = ADP + phosphate + H(+). The protein is Probable cation-transporting ATPase 13A4 (Atp13a4) of Mus musculus (Mouse).